We begin with the raw amino-acid sequence, 95 residues long: Large ribosomal subunit protein bL25 (95 aa).

This sequence belongs to the bacterial ribosomal protein bL25 family. Part of the 50S ribosomal subunit; part of the 5S rRNA/L5/L18/L25 subcomplex. Contacts the 5S rRNA. Binds to the 5S rRNA independently of L5 and L18.

This is one of the proteins that binds to the 5S RNA in the ribosome where it forms part of the central protuberance. The protein is Large ribosomal subunit protein bL25 of Haemophilus influenzae (strain ATCC 51907 / DSM 11121 / KW20 / Rd).